The following is a 397-amino-acid chain: Class V chitinase CHIT5 (397 aa).

A signal peptide spans 1–18 (MIIKLLVALIHYLHETMA). A GH18 domain is found at 54–397 (GVRAAYWPAW…SKQASNAWGY (344 aa)). N-linked (GlcNAc...) asparagine glycans are attached at residues N128 and N147. Residue E166 is the Proton donor of the active site. N193, N209, N247, and N261 each carry an N-linked (GlcNAc...) asparagine glycan.

It belongs to the glycosyl hydrolase 18 family. Chitinase class V subfamily.

It carries out the reaction Random endo-hydrolysis of N-acetyl-beta-D-glucosaminide (1-&gt;4)-beta-linkages in chitin and chitodextrins.. The protein operates within glycan degradation; chitin degradation. In terms of biological role, possesses chitinase activity in vitro toward glycol chitin, carboxymethyl-chitin, colloidal chitin, and the chitin oligosaccharides (N-acetylglucosamine) (GlcNAc)6 and (GlcNAc)5. Hydrolyzes (GlcNAc)6 into (GlcNAc)4 and (GlcNAc)2, or two (GlcNAc)3 molecules. Has the capacity to inhibit hyphal growth of the fungus Trichoderma viride in an agar-plate bioassay. Involved in symbiotic signaling. Required for root hair infection threads (ITs) elongation and nodule development. Possesses Nod factor (NF) hydrolase activity. NFs are lipo-chitooligosaccharide signaling molecules produced by nitrogen-fixing rhizobia to initiate nodulation (symbiosis) on the roots of legumes. Modulates NF levels and signaling to complete transition of infected nodules to functional nitrogen-fixing organs. The protein is Class V chitinase CHIT5 of Lotus japonicus (Lotus corniculatus var. japonicus).